We begin with the raw amino-acid sequence, 335 residues long: Dihydroorotate dehydrogenase (quinone) (335 aa).

FMN-binding positions include alanine 61–lysine 65 and threonine 85. Lysine 65 is a binding site for substrate. Residue asparagine 110–phenylalanine 114 participates in substrate binding. Residues asparagine 138 and asparagine 171 each coordinate FMN. Asparagine 171 is a substrate binding site. Serine 174 serves as the catalytic Nucleophile. Asparagine 176 contributes to the substrate binding site. Residues lysine 216 and threonine 244 each coordinate FMN. Substrate is bound at residue asparagine 245 to threonine 246. Residues glycine 267, glycine 296, and tyrosine 317–serine 318 contribute to the FMN site.

Belongs to the dihydroorotate dehydrogenase family. Type 2 subfamily. Monomer. FMN is required as a cofactor.

The protein localises to the cell membrane. It catalyses the reaction (S)-dihydroorotate + a quinone = orotate + a quinol. It functions in the pathway pyrimidine metabolism; UMP biosynthesis via de novo pathway; orotate from (S)-dihydroorotate (quinone route): step 1/1. Functionally, catalyzes the conversion of dihydroorotate to orotate with quinone as electron acceptor. In Pseudoalteromonas atlantica (strain T6c / ATCC BAA-1087), this protein is Dihydroorotate dehydrogenase (quinone).